Consider the following 231-residue polypeptide: Protein C activator (231 aa).

The Peptidase S1 domain occupies 1-222 (VIGGDECNIN…YTDWIQSIIS (222 aa)). Intrachain disulfides connect Cys7-Cys138, Cys25-Cys41, Cys73-Cys229, Cys117-Cys183, Cys149-Cys162, and Cys173-Cys198. A glycan (N-linked (GlcNAc...) asparagine) is linked at Asn21. His40 acts as the Charge relay system in catalysis. Residue Asn78 is glycosylated (N-linked (GlcNAc...) asparagine). The Charge relay system role is filled by Asp85. Asn129 carries an N-linked (GlcNAc...) asparagine glycan. Ser177 acts as the Charge relay system in catalysis.

This sequence belongs to the peptidase S1 family. Snake venom subfamily. Monomer. As to expression, expressed by the venom gland.

It is found in the secreted. Its function is as follows. Snake venom serine protease that selectively cleaves the heavy chain of protein C (PROC). This activation is thrombomodulin-independent. The chain is Protein C activator from Agkistrodon contortrix contortrix (Southern copperhead).